Here is an 82-residue protein sequence, read N- to C-terminus: Small, acid-soluble spore protein gamma-type (82 aa).

Polar residues-rich tracts occupy residues 1–24 and 32–50; these read MANSNNKTNAQQVRKQNQQSASGQ and ASETNVQQVRKQNQQSAAG. A disordered region spans residues 1-82; sequence MANSNNKTNA…SAEQNKQQNS (82 aa). 2 repeats span residues 19 to 45 and 46 to 72; these read QSASGQGQFGTEFASETNVQQVRKQNQ and QSAAGQGQFGTEFASETDAQQVRQQNQ. A compositionally biased stretch (low complexity) spans 69–82; sequence QQNQSAEQNKQQNS.

Belongs to the gamma-type SASP family.

In terms of biological role, SASP are bound to spore DNA. They are double-stranded DNA-binding proteins that cause DNA to change to an a-like conformation. They protect the DNA backbone from chemical and enzymatic cleavage and are thus involved in dormant spore's high resistance to UV light. This chain is Small, acid-soluble spore protein gamma-type, found in Bacillus subtilis.